The sequence spans 452 residues: Bifunctional protein GlmU (452 aa).

The segment at 1 to 224 (MNIVILAAGQ…EWEVLGVNSK (224 aa)) is pyrophosphorylase. UDP-N-acetyl-alpha-D-glucosamine-binding positions include 6–9 (LAAG), K20, Q71, 76–77 (GT), 98–100 (YGD), G134, E149, N164, and N222. Mg(2+) is bound at residue D100. Residue N222 participates in Mg(2+) binding. Positions 225-245 (VQLAELERQHQLNLAGELLVA) are linker. The tract at residues 246-452 (GVRLADPARI…GWERPKKVKK (207 aa)) is N-acetyltransferase. UDP-N-acetyl-alpha-D-glucosamine is bound by residues R328 and K346. H358 functions as the Proton acceptor in the catalytic mechanism. Positions 361 and 372 each coordinate UDP-N-acetyl-alpha-D-glucosamine. Acetyl-CoA is bound by residues A375, 381 to 382 (NY), S400, A418, and R435.

The protein in the N-terminal section; belongs to the N-acetylglucosamine-1-phosphate uridyltransferase family. This sequence in the C-terminal section; belongs to the transferase hexapeptide repeat family. Homotrimer. Requires Mg(2+) as cofactor.

It localises to the cytoplasm. It carries out the reaction alpha-D-glucosamine 1-phosphate + acetyl-CoA = N-acetyl-alpha-D-glucosamine 1-phosphate + CoA + H(+). It catalyses the reaction N-acetyl-alpha-D-glucosamine 1-phosphate + UTP + H(+) = UDP-N-acetyl-alpha-D-glucosamine + diphosphate. It participates in nucleotide-sugar biosynthesis; UDP-N-acetyl-alpha-D-glucosamine biosynthesis; N-acetyl-alpha-D-glucosamine 1-phosphate from alpha-D-glucosamine 6-phosphate (route II): step 2/2. The protein operates within nucleotide-sugar biosynthesis; UDP-N-acetyl-alpha-D-glucosamine biosynthesis; UDP-N-acetyl-alpha-D-glucosamine from N-acetyl-alpha-D-glucosamine 1-phosphate: step 1/1. It functions in the pathway bacterial outer membrane biogenesis; LPS lipid A biosynthesis. Its function is as follows. Catalyzes the last two sequential reactions in the de novo biosynthetic pathway for UDP-N-acetylglucosamine (UDP-GlcNAc). The C-terminal domain catalyzes the transfer of acetyl group from acetyl coenzyme A to glucosamine-1-phosphate (GlcN-1-P) to produce N-acetylglucosamine-1-phosphate (GlcNAc-1-P), which is converted into UDP-GlcNAc by the transfer of uridine 5-monophosphate (from uridine 5-triphosphate), a reaction catalyzed by the N-terminal domain. The protein is Bifunctional protein GlmU of Dechloromonas aromatica (strain RCB).